Reading from the N-terminus, the 667-residue chain is MSLFVAVDNIDKVFSLTDGGEYIALKGINLEIKKGEFVSLIGHSGCGKSTLLNMIAGLDLPSEGIVTLEGQRIKQPGPDKMVIFQNYSLLPWLTVKQNIALAVDEVMKGASAAERKAIVEEHINLVGLGHAVDKRPGELSGGMKQRVAIARALAIRPKLLLLDEPFGALDALTRGNLQEQLMRICEQYQVTAVMVTHDVDEAVLLSDRIVMLTNGPGSNIGGILEVDIPRPRKRMEVVEHPSYYSLRSEIIYFLNQQKRIKKLRAKKTTAIARHGLEKVNLELGYVPLVACAPLVVAQEKGFFAKHGLDEVSLVRETSWRGIVDGIAGGYLDGAQMPAGMPTWLTAGGYREQSIPVVSALTMTRNGNAITLSKKLYDQGIYTAEDFRQLLLASDGDRHTLGMVHPSSMHNLLLRYWLAAHNINPDRDVHLKTIPPAQMVADLKAGTIDGYCVSEPWNLRASMEGAGFSIATDLEIWQNHPGKVLGVREDWAIAHPNTHVALVKALLEACAYCADPNHEMEIRELLATRQYLSTNIDYIHLGDPEGRTCRLGNPVEYSHHLFFGDQFNRPSRTEHLWMMTQMARWGDIPFPRNWVEILERVCRVGVFSTAARELGYDVNYQRQPIALFDGKVFNADDPIAYLNQTVIHRNFTIAEVHLDNPTPAPVFA.

One can recognise an ABC transporter domain in the interval 5–239 (VAVDNIDKVF…RPRKRMEVVE (235 aa)). Residue 42-49 (GHSGCGKS) coordinates ATP. The interval 281-667 (LELGYVPLVA…DNPTPAPVFA (387 aa)) is cmpA-like.

This sequence belongs to the ABC transporter superfamily. Nitrate/nitrite/cyanate uptake transporter (NitT) (TC 3.A.1.16) family. In terms of assembly, the complex is composed of two ATP-binding proteins (CmpC and CmpD), a transmembrane protein (CmpB) and a solute-binding protein (CmpA).

Its subcellular location is the cell inner membrane. Its function is as follows. Part of the ABC transporter complex CmpABCD involved in bicarbonate transport. Responsible for energy coupling to the transport system. In Synechocystis sp. (strain ATCC 27184 / PCC 6803 / Kazusa), this protein is Bicarbonate transport ATP-binding protein CmpC (cmpC).